Consider the following 295-residue polypeptide: NAD kinase (295 aa).

Aspartate 73 (proton acceptor) is an active-site residue. Residues aspartate 73 to glycine 74, arginine 78, asparagine 146 to glutamate 147, lysine 157, arginine 174, aspartate 176, and threonine 187 to serine 192 each bind NAD(+).

Belongs to the NAD kinase family. It depends on a divalent metal cation as a cofactor.

The protein resides in the cytoplasm. The catalysed reaction is NAD(+) + ATP = ADP + NADP(+) + H(+). In terms of biological role, involved in the regulation of the intracellular balance of NAD and NADP, and is a key enzyme in the biosynthesis of NADP. Catalyzes specifically the phosphorylation on 2'-hydroxyl of the adenosine moiety of NAD to yield NADP. In Wigglesworthia glossinidia brevipalpis, this protein is NAD kinase.